A 234-amino-acid polypeptide reads, in one-letter code: Ubiquinone biosynthesis O-methyltransferase (234 aa).

4 residues coordinate S-adenosyl-L-methionine: Arg36, Gly56, Asp77, and Met125.

Belongs to the methyltransferase superfamily. UbiG/COQ3 family.

The catalysed reaction is a 3-demethylubiquinol + S-adenosyl-L-methionine = a ubiquinol + S-adenosyl-L-homocysteine + H(+). The enzyme catalyses a 3-(all-trans-polyprenyl)benzene-1,2-diol + S-adenosyl-L-methionine = a 2-methoxy-6-(all-trans-polyprenyl)phenol + S-adenosyl-L-homocysteine + H(+). It participates in cofactor biosynthesis; ubiquinone biosynthesis. In terms of biological role, O-methyltransferase that catalyzes the 2 O-methylation steps in the ubiquinone biosynthetic pathway. The protein is Ubiquinone biosynthesis O-methyltransferase of Actinobacillus pleuropneumoniae serotype 7 (strain AP76).